The primary structure comprises 441 residues: Protein eva-1 homolog C (441 aa).

Positions 1–23 (MLLPGPARQPPTPQPVQHPGLRR) are disordered. The N-terminal stretch at 1–48 (MLLPGPARQPPTPQPVQHPGLRRQVEPPGQLLRLFYCTVLVCSKEISA) is a signal peptide. Over residues 7 to 16 (ARQPPTPQPV) the composition is skewed to pro residues. Residues 49–322 (LTDFSGYLTK…AYIRAHPERA (274 aa)) are Extracellular-facing. Residue asparagine 62 is glycosylated (N-linked (GlcNAc...) asparagine). The 93-residue stretch at 67-159 (ACDGDYLNLQ…KYLLVSFKCQ (93 aa)) folds into the SUEL-type lectin 1 domain. Residue asparagine 165 is glycosylated (N-linked (GlcNAc...) asparagine). The 93-residue stretch at 168–260 (VCEDQELKLH…KYLTVTYACV (93 aa)) folds into the SUEL-type lectin 2 domain. Residues 323–343 (ALLFVSSVCIGLALTLCALVI) form a helical membrane-spanning segment. The Cytoplasmic segment spans residues 344 to 441 (RESCAKDFRD…SLPRNMGQFY (98 aa)). The disordered stretch occupies residues 362 to 391 (VPGSDKVEEDSEDEEEEEDSSESDFPGELS). A compositionally biased stretch (acidic residues) spans 368–383 (VEEDSEDEEEEEDSSE).

Belongs to the EVA1 family.

It is found in the cell membrane. Binds heparin. The protein is Protein eva-1 homolog C (EVA1C) of Pan troglodytes (Chimpanzee).